The chain runs to 270 residues: Checkpoint signal transducer rad24 (270 aa).

Phosphoserine is present on residues Ser-34 and Ser-66. The interval 242 to 270 is disordered; the sequence is AAAGGNTEGAQENAPSNAPEGEAEPKADA.

The protein belongs to the 14-3-3 family. As to quaternary structure, homodimer. Binds preferentially to mei2 phosphorylated by ran1/pat1. Binds preferentially to cdc25 phosphorylated by srk1 during G2; the interaction is increased during osmotic stress. Interacts with byr2. Interacts with rad25.

It localises to the cytoplasm. Acts in cell cycle and stress checkpoint signaling by sequestering signal transducers regulated by the checkpoints. Required for the DNA damage checkpoint that ensures that DNA damage is repaired before mitosis is attempted. During environmental stress, sequesters srk1-phosphorylated cdc25 in the cytoplasm to delay the G2/M transition. Sequesters byr2 in the cytoplasm to prevent its translocation to the plasma membrane. Sequesters ran1/pat1-phosphorylated mei2 from its non-coding RNA activators (including meiRNA), to prevent meiotic induction in vegetative cells and to regulate meiosis I. The sequence is that of Checkpoint signal transducer rad24 from Schizosaccharomyces pombe (strain 972 / ATCC 24843) (Fission yeast).